The chain runs to 802 residues: Oligophrenin-1 (802 aa).

The region spanning 265 to 368 (QPTIEGYLYT…WMEAMDGKEP (104 aa)) is the PH domain. Positions 380–564 (MELNEVGFKF…ILIEHFGKIY (185 aa)) constitute a Rho-GAP domain. Disordered regions lie at residues 606–665 (SLDE…SEPC) and 681–802 (GTKA…GDES). Residues 617–627 (QTPNGTITSNL) are compositionally biased toward polar residues. Basic and acidic residues predominate over residues 716-732 (HHKEGDTDGFSKVRPPG).

Interacts with HOMER1. Interacts with AMPA receptor complexes. Interacts with SH3GL2 (endophilin-A1). Interacts (via C-terminus) with NR1D1.

Its subcellular location is the postsynapse. It localises to the presynapse. The protein localises to the cell projection. The protein resides in the axon. It is found in the dendritic spine. Its subcellular location is the dendrite. It localises to the cytoplasm. Functionally, stimulates GTP hydrolysis of members of the Rho family. Its action on RHOA activity and signaling is implicated in growth and stabilization of dendritic spines, and therefore in synaptic function. Critical for the stabilization of AMPA receptors at postsynaptic sites. Critical for the regulation of synaptic vesicle endocytosis at presynaptic terminals. Required for the localization of NR1D1 to dendrites, can suppress its repressor activity and protect it from proteasomal degradation. The sequence is that of Oligophrenin-1 (Ophn1) from Mus musculus (Mouse).